A 352-amino-acid polypeptide reads, in one-letter code: MNTLLMHCRPGFEGEVCAEIAEHAATLEIPGYAKSKPASAHVEFVCQDADGAERLMRRLRFADLIFPRQWARGPGFIELPESQRIEVLLAELASYPVCGSLWLEVLDTNAGKEVSTFCRKFEKPLRAALVKAGRLQEDPALPRLLLTFRSGREVFVGLAEPRNSALWPMGIPRLKFPREAPSRSTLKLEEAWHQFIPRSEWDKRLAPDMLAVDLGAAPGGWTWQLVNREMRVTAVDNGPMAENLMYSGLVDHQKVDGYQYRPRQRVDWMVCDIVEKPARTGALIETWIGEGLCREAVVNLKLPMKQRYAEVRKILQRLRESFDARGLKVVIGCKQLYHDREEVTCHLRRLER.

S-adenosyl-L-methionine-binding positions include Ser184, 217–220 (APGG), Asp236, Asp256, and Asp272. Residue Lys301 is the Proton acceptor of the active site.

This sequence belongs to the class I-like SAM-binding methyltransferase superfamily. RNA methyltransferase RlmE family. RlmM subfamily. Monomer.

The protein localises to the cytoplasm. The catalysed reaction is cytidine(2498) in 23S rRNA + S-adenosyl-L-methionine = 2'-O-methylcytidine(2498) in 23S rRNA + S-adenosyl-L-homocysteine + H(+). In terms of biological role, catalyzes the 2'-O-methylation at nucleotide C2498 in 23S rRNA. The polypeptide is Ribosomal RNA large subunit methyltransferase M (Pseudomonas aeruginosa (strain UCBPP-PA14)).